The primary structure comprises 400 residues: Large envelope protein (400 aa).

Methionine 1 carries the N-acetylmethionine modification. Disordered regions lie at residues 1–55 (MGGW…WPEA) and 85–118 (LTTVPAAPPPASTNRQSGRQPTPISPPLRDSHPQ). Residue glycine 2 is the site of N-myristoyl glycine; by host attachment. A pre-S1 region spans residues 2-119 (GGWSSKPRQG…PPLRDSHPQA (118 aa)). The tract at residues 2-174 (GGWSSKPRQG…FSRTGDPAPN (173 aa)) is pre-S. Topologically, residues 2 to 181 (GGWSSKPRQG…APNMESTTSG (180 aa)) are virion surface; in external conformation. Residues 2–253 (GGWSSKPRQG…PGYRWMCLRR (252 aa)) are Intravirion; in internal conformation-facing. Residue tryptophan 4 is glycosylated (N-linked (GlcNAc...) asparagine). The span at 96-106 (STNRQSGRQPT) shows a compositional bias: polar residues. A pre-S2 region spans residues 120-174 (MQWNSTTFHQALLDPRVKGLYFPAGGSSSGTVNPVPTTASPISSIFSRTGDPAPN). The chain crosses the membrane as a helical span at residues 182–202 (FLGPLLVLQAGFFLLTRILTI). Residues 203–253 (PQSLDSWWTSLNFLGGAPTCPGQNSQSPTSNHSPTSCPPICPGYRWMCLRR) lie on the Intravirion; in external conformation side of the membrane. Residues 254-274 (FIIFLFILLLCLIFLLVLLDF) traverse the membrane as a helical segment. The Virion surface segment spans residues 275–348 (QGMLPVCPLL…WASVRFSWLS (74 aa)). An N-linked (GlcNAc...) asparagine; by host glycan is attached at asparagine 320. A helical transmembrane segment spans residues 349 to 369 (LLVPFVQWFAGLSPTVWLSVI). The Intravirion segment spans residues 370-375 (WMMWYW). The helical transmembrane segment at 376–398 (GPSLYNILSPFLPLLPIFFCLWV) threads the bilayer. The Virion surface portion of the chain corresponds to 399-400 (YI).

This sequence belongs to the orthohepadnavirus major surface antigen family. In terms of assembly, in its internal form (Li-HBsAg), interacts with the capsid protein and with the isoform S. Interacts with host chaperone CANX. As to quaternary structure, associates with host chaperone CANX through its pre-S2 N glycan; this association may be essential for isoform M proper secretion. Interacts with isoform L. Interacts with the antigens of satellite virus HDV (HDVAgs); this interaction is required for encapsidation of HDV genomic RNA. Post-translationally, isoform M is N-terminally acetylated by host at a ratio of 90%, and N-glycosylated by host at the pre-S2 region. Myristoylated.

It localises to the virion membrane. The large envelope protein exists in two topological conformations, one which is termed 'external' or Le-HBsAg and the other 'internal' or Li-HBsAg. In its external conformation the protein attaches the virus to cell receptors and thereby initiating infection. This interaction determines the species specificity and liver tropism. This attachment induces virion internalization predominantly through caveolin-mediated endocytosis. The large envelope protein also assures fusion between virion membrane and endosomal membrane. In its internal conformation the protein plays a role in virion morphogenesis and mediates the contact with the nucleocapsid like a matrix protein. In terms of biological role, the middle envelope protein plays an important role in the budding of the virion. It is involved in the induction of budding in a nucleocapsid independent way. In this process the majority of envelope proteins bud to form subviral lipoprotein particles of 22 nm of diameter that do not contain a nucleocapsid. The protein is Large envelope protein of Hepatitis B virus genotype C subtype ar (isolate Japan/S-207/1988) (HBV-C).